A 591-amino-acid chain; its full sequence is Aspartate--tRNA ligase (591 aa).

Residue E173 coordinates L-aspartate. An aspartate region spans residues 197-200; it reads QLFK. Position 219 (R219) interacts with L-aspartate. ATP-binding positions include 219-221 and Q228; that span reads RDE. H448 contributes to the L-aspartate binding site. An ATP-binding site is contributed by E482. R489 is a binding site for L-aspartate. 534 to 537 provides a ligand contact to ATP; sequence GLDR.

The protein belongs to the class-II aminoacyl-tRNA synthetase family. Type 1 subfamily. In terms of assembly, homodimer.

The protein resides in the cytoplasm. It carries out the reaction tRNA(Asp) + L-aspartate + ATP = L-aspartyl-tRNA(Asp) + AMP + diphosphate. Its function is as follows. Catalyzes the attachment of L-aspartate to tRNA(Asp) in a two-step reaction: L-aspartate is first activated by ATP to form Asp-AMP and then transferred to the acceptor end of tRNA(Asp). This Shewanella amazonensis (strain ATCC BAA-1098 / SB2B) protein is Aspartate--tRNA ligase.